The chain runs to 548 residues: MAKFMTPVIQDNPSGWGPCAVPEQFRDMPYQPFSKGDRLGKVADWTGATYQDKRYTNKYSSQFGGGSQYAYFHEEDESSFQLVDTARTQKTAYQRNRMRFAQRNLRRDKDRRNMLQFNLQILPKSAKQKERERIRLQKKFQKQFGVRQKWDQKSQKPRDSSVEVRSDWEVKEEMDFPQLMKMRYLEVSEPQDIECCGALEYYDKAFDRITTRSEKPLRSIKRIFHTVTTTDDPVIRKLAKTQGNVFATDAILATLMSCTRSVYSWDIVVQRVGSKLFFDKRDNSDFDLLTVSETANEPPQDEGNSFNSPRNLAMEATYINHNFSQQCLRMGKERYNFPNPNPFVEDDMDKNEIASVAYRYRWWKLGDDIDLIVRCEHDGVMTGANGGVSFINIKTLNEWDSRHCNGVDWRQKLDSQRGAVIATELKNNSYKLARWTCCALLAGSEYLKLGYVSRYHVKDSSRHVILGTQQFKPNEFASQINLSVENAWGILRCVIDICMKLEEGKYLILKDPNKQVIRVYSLPDGTFSSDEDEEEEEEEEEEEEEEET.

Lys-53 is subject to N6-acetyllysine. Ser-161 bears the Phosphoserine mark. The RNA gate stretch occupies residues 285–299; sequence DFDLLTVSETANEPP. A disordered region spans residues 523-548; it reads PDGTFSSDEDEEEEEEEEEEEEEEET. Phosphoserine occurs at positions 528 and 529. Residues 529–548 are compositionally biased toward acidic residues; sequence SDEDEEEEEEEEEEEEEEET.

This sequence belongs to the eIF-3 subunit D family. As to quaternary structure, component of the eukaryotic translation initiation factor 3 (eIF-3) complex, which is composed of 13 subunits: EIF3A, EIF3B, EIF3C, EIF3D, EIF3E, EIF3F, EIF3G, EIF3H, EIF3I, EIF3J, EIF3K, EIF3L and EIF3M. The eIF-3 complex appears to include 3 stable modules: module A is composed of EIF3A, EIF3B, EIF3G and EIF3I; module B is composed of EIF3F, EIF3H, and EIF3M; and module C is composed of EIF3C, EIF3D, EIF3E, EIF3K and EIF3L. EIF3C of module C binds EIF3B of module A and EIF3H of module B, thereby linking the three modules. EIF3J is a labile subunit that binds to the eIF-3 complex via EIF3B. The eIF-3 complex interacts with RPS6KB1 under conditions of nutrient depletion. Mitogenic stimulation leads to binding and activation of a complex composed of MTOR and RPTOR, leading to phosphorylation and release of RPS6KB1 and binding of EIF4B to eIF-3.

The protein localises to the cytoplasm. In terms of biological role, mRNA cap-binding component of the eukaryotic translation initiation factor 3 (eIF-3) complex, a complex required for several steps in the initiation of protein synthesis of a specialized repertoire of mRNAs. The eIF-3 complex associates with the 40S ribosome and facilitates the recruitment of eIF-1, eIF-1A, eIF-2:GTP:methionyl-tRNAi and eIF-5 to form the 43S pre-initiation complex (43S PIC). The eIF-3 complex stimulates mRNA recruitment to the 43S PIC and scanning of the mRNA for AUG recognition. The eIF-3 complex is also required for disassembly and recycling of post-termination ribosomal complexes and subsequently prevents premature joining of the 40S and 60S ribosomal subunits prior to initiation. The eIF-3 complex specifically targets and initiates translation of a subset of mRNAs involved in cell proliferation, including cell cycling, differentiation and apoptosis, and uses different modes of RNA stem-loop binding to exert either translational activation or repression. In the eIF-3 complex, EIF3D specifically recognizes and binds the 7-methylguanosine cap of a subset of mRNAs. The protein is Eukaryotic translation initiation factor 3 subunit D of Macaca fascicularis (Crab-eating macaque).